The chain runs to 219 residues: Ribose-5-phosphate isomerase A (219 aa).

Substrate-binding positions include 28–31 (TGST), 81–84 (DGAD), and 94–97 (KGGG). The active-site Proton acceptor is Glu103. Lys121 contacts substrate.

Belongs to the ribose 5-phosphate isomerase family. In terms of assembly, homodimer.

It carries out the reaction aldehydo-D-ribose 5-phosphate = D-ribulose 5-phosphate. It functions in the pathway carbohydrate degradation; pentose phosphate pathway; D-ribose 5-phosphate from D-ribulose 5-phosphate (non-oxidative stage): step 1/1. Its function is as follows. Catalyzes the reversible conversion of ribose-5-phosphate to ribulose 5-phosphate. The protein is Ribose-5-phosphate isomerase A of Shewanella oneidensis (strain ATCC 700550 / JCM 31522 / CIP 106686 / LMG 19005 / NCIMB 14063 / MR-1).